A 130-amino-acid chain; its full sequence is Large ribosomal subunit protein uL14 (130 aa).

The protein belongs to the universal ribosomal protein uL14 family. Part of the 50S ribosomal subunit. Forms a cluster with proteins L3 and L19. In the 70S ribosome, L14 and L19 interact and together make contacts with the 16S rRNA in bridges B5 and B8.

Functionally, binds to 23S rRNA. Forms part of two intersubunit bridges in the 70S ribosome. This Leptospira biflexa serovar Patoc (strain Patoc 1 / Ames) protein is Large ribosomal subunit protein uL14.